A 309-amino-acid polypeptide reads, in one-letter code: MDAFQSILKFFLNQKTAIGYSFMALLTVGSERLFSLVAFKCPCSIENTAYGLVFLFAPAWVLLILGFFLNNKAWRLFTGCCMNPQKIFPRRRCCRFFYVLGHITLSSLVAPVMWLSVALLNGTFYECAMSGTRSTRLLEMICKGKPKECWEELHKVSCGKSSMAAMDSEEVRLSLQAQSQILGWCLICSASFFSLLTTCYARCRSKVSYLQLSFWKTYAQREKEQLENKLLEYANKLSERNLKCFFENKKPDPFPMPSFAAWEAASELHSFHQDREHYSTLHKVVDDGLEQTPQEEETTMILVGTAQSL.

The Cytoplasmic portion of the chain corresponds to 1-15; that stretch reads MDAFQSILKFFLNQK. The helical transmembrane segment at 16 to 37 threads the bilayer; sequence TAIGYSFMALLTVGSERLFSLV. A 1,2-diacyl-sn-glycero-3-phosphate-binding residues include Arg-32 and Val-37. At 38 to 45 the chain is on the extracellular side; it reads AFKCPCSI. Cystine bridges form between Cys-41–Cys-127, Cys-43–Cys-158, and Cys-142–Cys-149. A helical membrane pass occupies residues 46–70; the sequence is ENTAYGLVFLFAPAWVLLILGFFLN. Over 71 to 99 the chain is Cytoplasmic; the sequence is NKAWRLFTGCCMNPQKIFPRRRCCRFFYV. Residues 100–129 traverse the membrane as a helical segment; the sequence is LGHITLSSLVAPVMWLSVALLNGTFYECAM. Asn-121 contributes to the a 1,2-diacyl-sn-glycero-3-phosphate binding site. At 130–174 the chain is on the extracellular side; it reads SGTRSTRLLEMICKGKPKECWEELHKVSCGKSSMAAMDSEEVRLS. The helical transmembrane segment at 175 to 200 threads the bilayer; that stretch reads LQAQSQILGWCLICSASFFSLLTTCY. Residues 201-309 lie on the Cytoplasmic side of the membrane; sequence ARCRSKVSYL…MILVGTAQSL (109 aa). Arg-202 contributes to the a 1,2-diacyl-sn-glycero-3-phosphate binding site.

This sequence belongs to the CALHM family. In terms of assembly, oligomerizes to form undecameric cone-shaped channels.

The protein resides in the membrane. Its function is as follows. May assemble to form large pore channels with gating and ion conductance likely regulated by membrane lipids. The polypeptide is Calcium homeostasis modulator protein 5 (Rattus norvegicus (Rat)).